The chain runs to 361 residues: Chorismate synthase (361 aa).

The span at 40–49 shows a compositional bias: basic and acidic residues; sequence DLQHDLDRRR. The disordered stretch occupies residues 40 to 60; it reads DLQHDLDRRRPGTSRHTTQRR. Arginine 48 and arginine 54 together coordinate NADP(+). FMN contacts are provided by residues 125 to 127, 237 to 238, glycine 277, 292 to 296, and arginine 318; these read RSS, NA, and KPTSS.

Belongs to the chorismate synthase family. In terms of assembly, homotetramer. The cofactor is FMNH2.

The enzyme catalyses 5-O-(1-carboxyvinyl)-3-phosphoshikimate = chorismate + phosphate. It participates in metabolic intermediate biosynthesis; chorismate biosynthesis; chorismate from D-erythrose 4-phosphate and phosphoenolpyruvate: step 7/7. Catalyzes the anti-1,4-elimination of the C-3 phosphate and the C-6 proR hydrogen from 5-enolpyruvylshikimate-3-phosphate (EPSP) to yield chorismate, which is the branch point compound that serves as the starting substrate for the three terminal pathways of aromatic amino acid biosynthesis. This reaction introduces a second double bond into the aromatic ring system. The polypeptide is Chorismate synthase (Chromohalobacter salexigens (strain ATCC BAA-138 / DSM 3043 / CIP 106854 / NCIMB 13768 / 1H11)).